The chain runs to 215 residues: MSEAKRLAAEKAIDYVEDGMIVGVGTGSTVAYFIDALGRIGHRIKGAVSSSEQSTARLRQHGIEVLDLNHTGTLSLYVDGADECDPNRCLIKGGGAALTREKIIAEASERFICIVDPSKQVPVLGNFPLPVEVIPMARSLVARQILALTGGQPVWRDGVVTDNGNVVLDVHNLHITDPVALERNLNQIPGVVCVGLFARRPADVVIVGGETPRVL.

Substrate is bound by residues 26-29 (TGST), 79-82 (DGAD), and 92-95 (KGGG). Glu-101 functions as the Proton acceptor in the catalytic mechanism. Lys-119 serves as a coordination point for substrate.

The protein belongs to the ribose 5-phosphate isomerase family. In terms of assembly, homodimer.

It carries out the reaction aldehydo-D-ribose 5-phosphate = D-ribulose 5-phosphate. It functions in the pathway carbohydrate degradation; pentose phosphate pathway; D-ribose 5-phosphate from D-ribulose 5-phosphate (non-oxidative stage): step 1/1. In terms of biological role, catalyzes the reversible conversion of ribose-5-phosphate to ribulose 5-phosphate. The polypeptide is Ribose-5-phosphate isomerase A (Xanthomonas campestris pv. campestris (strain 8004)).